A 559-amino-acid chain; its full sequence is NAD(P)H-quinone oxidoreductase chain 4-2 (559 aa).

Transmembrane regions (helical) follow at residues 5–25 (FPWL…IPLI), 35–55 (WYAL…FWTN), 86–106 (ISMP…FAAW), 114–134 (LFYF…VAQD), 136–156 (LLLF…VCIW), 168–188 (FLLY…GLAF), 207–227 (IALE…KLAI), 242–262 (SAPV…YGLI), 274–294 (VYFA…GGFS), 310–330 (VSHM…GISG), 331–351 (AMLQ…LAGV), 374–394 (VFAL…MSGF), 417–437 (VTVF…LSML), and 488–508 (VFIA…PKLA).

The protein belongs to the complex I subunit 4 family.

The protein resides in the cellular thylakoid membrane. The enzyme catalyses a plastoquinone + NADH + (n+1) H(+)(in) = a plastoquinol + NAD(+) + n H(+)(out). The catalysed reaction is a plastoquinone + NADPH + (n+1) H(+)(in) = a plastoquinol + NADP(+) + n H(+)(out). NDH-1 shuttles electrons from NAD(P)H, via FMN and iron-sulfur (Fe-S) centers, to quinones in the respiratory chain. The immediate electron acceptor for the enzyme in this species is believed to be plastoquinone. Couples the redox reaction to proton translocation (for every two electrons transferred, four hydrogen ions are translocated across the cytoplasmic membrane), and thus conserves the redox energy in a proton gradient. This chain is NAD(P)H-quinone oxidoreductase chain 4-2 (ndhD2), found in Synechocystis sp. (strain ATCC 27184 / PCC 6803 / Kazusa).